A 499-amino-acid polypeptide reads, in one-letter code: Aprataxin and PNK-like factor (499 aa).

Positions 1–108 (MPSDFFLQPL…RVFSAESEVE (108 aa)) constitute an FHA-like domain. Position 116 is a phosphoserine; by ATM (serine 116). Disordered regions lie at residues 134–183 (VNLP…TQRK), 197–292 (DQSL…KTNK), and 305–358 (VSKH…DTAD). A compositionally biased stretch (polar residues) spans 141–152 (TGASQLQGSPEI). Phosphoserine is present on serine 149. Positions 182–191 (RKRILPAWML) match the KBM motif. The segment covering 239–248 (PSGNSKSVSA) has biased composition (polar residues). Positions 251–261 (DPGKKCRKADQ) are enriched in basic and acidic residues. Over residues 264-278 (PGVSSENVPESSSSN) the composition is skewed to low complexity. A compositionally biased stretch (basic and acidic residues) spans 281–292 (KDPDVDIVKTNK). A compositionally biased stretch (low complexity) spans 340–349 (PESSSAPSSP). 4 residues coordinate a glycoprotein: arginine 371, tyrosine 376, tyrosine 381, and arginine 382. The PBZ-type 1 zinc finger occupies 372 to 393 (TACMYGANCYRRNPLHFQHFSH). The flexible linker stretch occupies residues 401-411 (EVHGTDEGVIG). The PBZ-type 2 zinc-finger motif lies at 414–435 (PECPYGASCYRKNPQHKMEYRH). A glycoprotein-binding residues include tyrosine 418, tyrosine 423, and arginine 424. Residues 440–499 (ARVALDEDDDDVGQPSDDEDEEDYEPTDEDSDWHPGKDDEEQEDVDELLKEAKSSLHLKH) form a disordered region. Over residues 445–470 (DEDDDDVGQPSDDEDEEDYEPTDEDS) the composition is skewed to acidic residues. The NAP1L motif motif lies at 463 to 487 (YEPTDEDSDWHPGKDDEEQEDVDEL).

Belongs to the APLF family. Interacts with LIG4. Interacts with PARP1. Interacts with XRCC4. Interacts (via KBM motif) with XRCC5 and XRCC6; promoting recruitment to DNA damage sites. Interacts with XRCC1. Interacts (via C-terminal disordered region) with histones; interacts with histone H2A, H2B and H3-H4. In terms of processing, poly-ADP-ribosylated. In addition to binding non covalently poly-ADP-ribose via its PBZ-type zinc fingers, the protein is also covalently poly-ADP-ribosylated by PARP1. Post-translationally, phosphorylated in an ATM-dependent manner upon double-strand DNA break.

It localises to the nucleus. Its subcellular location is the chromosome. The protein localises to the cytoplasm. It is found in the cytosol. Histone chaperone involved in single-strand and double-strand DNA break repair. Recruited to sites of DNA damage through interaction with branched poly-ADP-ribose chains, a polymeric post-translational modification synthesized transiently at sites of chromosomal damage to accelerate DNA strand break repair reactions. Following recruitment to DNA damage sites, acts as a histone chaperone that mediates histone eviction during DNA repair and promotes recruitment of histone variant MACROH2A1. Also has a nuclease activity: displays apurinic-apyrimidinic (AP) endonuclease and 3'-5' exonuclease activities in vitro. Also able to introduce nicks at hydroxyuracil and other types of pyrimidine base damage. Together with PARP3, promotes the retention of the LIG4-XRCC4 complex on chromatin and accelerate DNA ligation during non-homologous end-joining (NHEJ). Also acts as a negative regulator of cell pluripotency by promoting histone exchange. Required for the embryo implantation during the epithelial to mesenchymal transition in females. This is Aprataxin and PNK-like factor (Aplf) from Mus musculus (Mouse).